The primary structure comprises 254 residues: 4-hydroxy-tetrahydrodipicolinate reductase (254 aa).

Residues 8–13 (GCSGKM), Asp-35, 86–88 (CST), and 110–113 (SANM) contribute to the NAD(+) site. The Proton donor/acceptor role is filled by His-143. His-144 provides a ligand contact to (S)-2,3,4,5-tetrahydrodipicolinate. Lys-147 acts as the Proton donor in catalysis. (S)-2,3,4,5-tetrahydrodipicolinate is bound at residue 153-154 (GT).

Belongs to the DapB family.

The protein resides in the cytoplasm. The catalysed reaction is (S)-2,3,4,5-tetrahydrodipicolinate + NAD(+) + H2O = (2S,4S)-4-hydroxy-2,3,4,5-tetrahydrodipicolinate + NADH + H(+). It carries out the reaction (S)-2,3,4,5-tetrahydrodipicolinate + NADP(+) + H2O = (2S,4S)-4-hydroxy-2,3,4,5-tetrahydrodipicolinate + NADPH + H(+). Its pathway is amino-acid biosynthesis; L-lysine biosynthesis via DAP pathway; (S)-tetrahydrodipicolinate from L-aspartate: step 4/4. Catalyzes the conversion of 4-hydroxy-tetrahydrodipicolinate (HTPA) to tetrahydrodipicolinate. In Clostridium perfringens (strain SM101 / Type A), this protein is 4-hydroxy-tetrahydrodipicolinate reductase.